The chain runs to 157 residues: S-ribosylhomocysteine lyase (157 aa).

Residues His54, His58, and Cys124 each coordinate Fe cation.

This sequence belongs to the LuxS family. In terms of assembly, homodimer. Requires Fe cation as cofactor.

The enzyme catalyses S-(5-deoxy-D-ribos-5-yl)-L-homocysteine = (S)-4,5-dihydroxypentane-2,3-dione + L-homocysteine. Functionally, involved in the synthesis of autoinducer 2 (AI-2) which is secreted by bacteria and is used to communicate both the cell density and the metabolic potential of the environment. The regulation of gene expression in response to changes in cell density is called quorum sensing. Catalyzes the transformation of S-ribosylhomocysteine (RHC) to homocysteine (HC) and 4,5-dihydroxy-2,3-pentadione (DPD). This is S-ribosylhomocysteine lyase from Pediococcus pentosaceus (strain ATCC 25745 / CCUG 21536 / LMG 10740 / 183-1w).